A 222-amino-acid polypeptide reads, in one-letter code: Uridine diphosphate glucose pyrophosphatase NUDT14 (222 aa).

Residues 38–206 enclose the Nudix hydrolase domain; the sequence is KTHDSVTILM…DVPKTLGVIF (169 aa). The short motif at 111-129 is the Nudix box element; the sequence is PGLSLEEVACKEAWEECGY.

Belongs to the Nudix hydrolase family. As to quaternary structure, homodimer. Mg(2+) is required as a cofactor.

The protein localises to the cytoplasm. The enzyme catalyses UDP-sugar + H2O = UMP + alpha-D-aldose 1-phosphate.. Its function is as follows. Hydrolyzes UDP-glucose to glucose 1-phosphate and UMP and ADP-ribose to ribose 5-phosphate and AMP. The physiological substrate is probably UDP-glucose. Poor activity on other substrates such as ADP-glucose, CDP-glucose, GDP-glucose and GDP-mannose. The chain is Uridine diphosphate glucose pyrophosphatase NUDT14 (NUDT14) from Bos taurus (Bovine).